The sequence spans 336 residues: RHOMBOID-like protein 12, mitochondrial (336 aa).

The transit peptide at 1–85 directs the protein to the mitochondrion; that stretch reads MKAIFNRRVV…RGFFASALGN (85 aa). Helical transmembrane passes span 135 to 155, 185 to 205, 216 to 236, 254 to 274, 276 to 296, and 307 to 327; these read VVLGLVIANAGVFVMWRVFNQ, IDIGHIVSNMIGLYFFGTSIA, LYLAGALGGSVFYLIHHAYMA, PGLGASGAVNAIMLLDIFLHP, ATLYLEFFIPVPAMLLGIFLI, and NSNISGSAHLGGAAVAAIAWA. Residue S259 is the Nucleophile of the active site. H315 serves as the catalytic Charge relay system.

This sequence belongs to the peptidase S54 family.

It is found in the mitochondrion membrane. Functionally, probable rhomboid-type serine protease that catalyzes intramembrane proteolysis. Unable to cleave either of the yeast Pcp1 substrates in yeast cells. This Arabidopsis thaliana (Mouse-ear cress) protein is RHOMBOID-like protein 12, mitochondrial.